Consider the following 101-residue polypeptide: uncharacterized protein (101 aa).

A helical membrane pass occupies residues valine 17–phenylalanine 37.

It is found in the endoplasmic reticulum membrane. This is an uncharacterized protein from Schizosaccharomyces pombe (strain 972 / ATCC 24843) (Fission yeast).